Here is a 338-residue protein sequence, read N- to C-terminus: Replication factor C subunit 3 (338 aa).

ATP is bound at residue G57–T64.

Belongs to the activator 1 small subunits family. As to quaternary structure, heteropentamer of subunits RFC1, RFC2, RFC3, RFC4 and RFC5 that forms a complex with PCNA in the presence of ATP.

The protein resides in the nucleus. Its function is as follows. The elongation of primed DNA templates by DNA polymerase delta and epsilon requires the action of the accessory proteins proliferating cell nuclear antigen (PCNA) and activator 1. Subunit 3 binds ATP. This Blastobotrys adeninivorans (Yeast) protein is Replication factor C subunit 3 (RFC3).